Reading from the N-terminus, the 620-residue chain is LysM domain receptor-like kinase 3 (620 aa).

An N-terminal signal peptide occupies residues 1-23 (MNLKNGLLLFILFLDCVFFKVES). At 24–231 (KCVKGCDVAL…YSRTGIAKGS (208 aa)) the chain is on the extracellular side. Disulfide bonds link Cys25–Cys92, Cys29–Cys154, and Cys90–Cys152. Asn46 carries an N-linked (GlcNAc...) asparagine glycan. One can recognise a LysM 1; degenerate domain in the interval 46 to 72 (NISNFMQSKIVLTNSFDVIMSYNRDVV). LysM domains lie at 102–148 (FEYT…KINV) and 167–210 (VTYP…VFIP). Chitin contacts are provided by residues 108–114 (EGDDYDL) and 136–142 (DPNHIPV). Residues Asn147 and Asn199 are each glycosylated (N-linked (GlcNAc...) asparagine). The chain crosses the membrane as a helical span at residues 232–252 (AVGIAMAGIFGLLLFVIYIYA). Over 253–620 (KYFQKKEEEK…QSLINLLSTR (368 aa)) the chain is Cytoplasmic. The span at 265–278 (LPQTSRAFSTQDAS) shows a compositional bias: polar residues. The tract at residues 265 to 292 (LPQTSRAFSTQDASGSAEYETSGSSGHA) is disordered. 2 positions are modified to phosphoserine: Ser269 and Ser273. Positions 322 to 595 (FSLDNKIGQG…RSIVVALMTL (274 aa)) constitute a Protein kinase domain. ATP-binding positions include 328–336 (IGQGGFGAV) and Lys349. Catalysis depends on Asp441, which acts as the Proton acceptor.

It belongs to the protein kinase superfamily. Ser/Thr protein kinase family. Forms homodimers and homooligomers. Forms heteromeric complexes with NFP at the cell periphery in nodules. Interacts with PUB1. Post-translationally, autophosphorylated. In terms of tissue distribution, expressed in the epidermal and root hair cells of the developing root hair zone during nonsymbiotic growth. Accumulates in roots and nodules during symbiotic growth with rhizobia. Localized at the cell periphery in a narrow zone of about two cell layers (e.g. L1/L2 zone) at the nodule apex upon infection by rhizobia, from the meristem to the infection zone (at protein level).

It is found in the cell membrane. It localises to the vacuole lumen. It carries out the reaction L-seryl-[protein] + ATP = O-phospho-L-seryl-[protein] + ADP + H(+). The catalysed reaction is L-threonyl-[protein] + ATP = O-phospho-L-threonyl-[protein] + ADP + H(+). In terms of biological role, putative receptor for S.meliloti Nod factor signals essential for the establishment of the nitrogen-fixing, root nodule symbiosis with S.meliloti. Involved in the control of root hair curling after S.meliloti infection, probably by modulating the reorganization of the microtubular cytoskeleton in epidermal and cortical cells. Regulates a subset of Nod factor-induced genes. The sequence is that of LysM domain receptor-like kinase 3 from Medicago truncatula (Barrel medic).